The chain runs to 144 residues: Short-chain diamines transporter (144 aa).

4 helical membrane passes run 9 to 29 (IHAI…LSFI), 35 to 55 (EVTG…NMIF), 76 to 96 (ILHA…MIAY), and 103 to 123 (IDAF…TFIF).

Belongs to the proteobacterial antimicrobial compound efflux (PACE) (TC 2.A.117) family. In terms of assembly, exists in a monomer-homodimer equilibrium. The dimer is probably the functional form of the protein, and the assembly of the dimer is mediated by binding of chlorhexidine and promoted by high pH conditions.

The protein localises to the cell inner membrane. Protonation/deprotonation of Glu-15 may play an important role in transporter function. Cadaverin transport is inhibited in the presence of CCCP. Mediates the efflux of short-chain diamines when energized by an electrochemical gradient. Recognizes specifically the short-chain diamines cadaverine and putrescine as substrates, and promotes the active transport of these substrates in exchange for a cation. Protons are probably the primary source of energy for transport, however it was not possible to conclude with complete certainty that protons, rather than alternative cations such as Na(+) ions, are exchanged for substrates by AceI. In addition, is involved in resistance to the synthetic biocide chlorhexidine, a widely used antiseptic and disinfectant in both hospital and community settings. Interacts directly with chlorhexidine and mediates its efflux via an energy-dependent mechanism. The polypeptide is Short-chain diamines transporter (Acinetobacter baumannii (strain ATCC 17978 / DSM 105126 / CIP 53.77 / LMG 1025 / NCDC KC755 / 5377)).